A 289-amino-acid polypeptide reads, in one-letter code: Proteasome subunit beta (289 aa).

A propeptide spans 1-55 (MTWPLPDRLSINSAISGSAVDLSSFAEFLRRQAPELLPASIKHGGGAVGDQLPHA) (removed in mature form; by autocatalysis). Thr-56 (nucleophile) is an active-site residue.

This sequence belongs to the peptidase T1B family. As to quaternary structure, the 20S proteasome core is composed of 14 alpha and 14 beta subunits that assemble into four stacked heptameric rings, resulting in a barrel-shaped structure. The two inner rings, each composed of seven catalytic beta subunits, are sandwiched by two outer rings, each composed of seven alpha subunits. The catalytic chamber with the active sites is on the inside of the barrel. Has a gated structure, the ends of the cylinder being occluded by the N-termini of the alpha-subunits. Is capped by the proteasome-associated ATPase, ARC.

The protein resides in the cytoplasm. The enzyme catalyses Cleavage of peptide bonds with very broad specificity.. The protein operates within protein degradation; proteasomal Pup-dependent pathway. Its activity is regulated as follows. The formation of the proteasomal ATPase ARC-20S proteasome complex, likely via the docking of the C-termini of ARC into the intersubunit pockets in the alpha-rings, may trigger opening of the gate for substrate entry. Interconversion between the open-gate and close-gate conformations leads to a dynamic regulation of the 20S proteasome proteolysis activity. Its function is as follows. Component of the proteasome core, a large protease complex with broad specificity involved in protein degradation. The protein is Proteasome subunit beta of Mycobacterium marinum (strain ATCC BAA-535 / M).